We begin with the raw amino-acid sequence, 140 residues long: Large ribosomal subunit protein uL13 (140 aa).

The protein belongs to the universal ribosomal protein uL13 family. In terms of assembly, part of the 50S ribosomal subunit.

This protein is one of the early assembly proteins of the 50S ribosomal subunit, although it is not seen to bind rRNA by itself. It is important during the early stages of 50S assembly. In Nautilia profundicola (strain ATCC BAA-1463 / DSM 18972 / AmH), this protein is Large ribosomal subunit protein uL13.